We begin with the raw amino-acid sequence, 275 residues long: Myoblast determination protein 1 homolog 2 (275 aa).

In terms of domain architecture, bHLH spans 84–135 (DRRKAATMRERRRLGKVNDAFENLKRCTSNNPNQRLPKVEILRNAISYIESL). Positions 232 to 265 (SGQEGSEGSPCSPQEGSILSRNGGTVPSPTNCPQ) are enriched in polar residues. A disordered region spans residues 232 to 275 (SGQEGSEGSPCSPQEGSILSRNGGTVPSPTNCPQPSHDPIYQVL).

Efficient DNA binding requires dimerization with another bHLH protein.

The protein resides in the nucleus. Its function is as follows. May act as a transcriptional activator that promotes transcription of muscle-specific target genes and plays a role in muscle differentiation. The protein is Myoblast determination protein 1 homolog 2 (myod2) of Oncorhynchus mykiss (Rainbow trout).